The chain runs to 1711 residues: Reverse gyrase (1711 aa).

Residues 1–39 form an RG N-terminal-type zinc finger; it reads MKAVYREMCPNCWGRISDERLVMRNPCEECLDEPVHADS. The Zn(2+) site is built by C9, C12, C27, and C30. ATP is bound by residues Q89 and 106 to 113; that span reads APTGMGKS. The Helicase ATP-binding domain maps to 93-256; sequence VKRLLKGRSF…RLKKQMSRYL (164 aa). Residues 213–216 carry the DEAD box motif; it reads DDVD. Residues 638-1711 form a topoisomerase I region; the sequence is DLVRSALMIV…YSEIQRYVSG (1074 aa). The 164-residue stretch at 642 to 805 folds into the Toprim domain; sequence SALMIVESPN…NIKRIEFHEV (164 aa). E648 serves as a coordination point for Mg(2+). The RG C-terminal-type zinc finger occupies 722-751; sequence LKRCRDCGHQFVDWEKKGVCPRCGSTNVRD. Zn(2+)-binding residues include C725, C728, C741, and C744. Mg(2+) is bound at residue D774. Positions 821 to 1709 constitute a Topo IA-type catalytic domain; it reads NENRVNAQIV…ELYSEIQRYV (889 aa). The DOD-type homing endonuclease domain maps to 1160-1287; the sequence is VFGLVLGDGT…LSVYLYQIGI (128 aa). Y1452 acts as the O-(5'-phospho-DNA)-tyrosine intermediate in catalysis.

The protein in the N-terminal section; belongs to the DEAD box helicase family. DDVD subfamily. In the C-terminal section; belongs to the type IA topoisomerase family. As to quaternary structure, monomer. Zn(2+) is required as a cofactor. It depends on Mg(2+) as a cofactor. This protein undergoes a protein self splicing that involves a post-translational excision of the intervening region (intein) followed by peptide ligation.

Its subcellular location is the cytoplasm. It carries out the reaction ATP + H2O = ADP + phosphate + H(+). Modifies the topological state of DNA by introducing positive supercoils in an ATP-dependent process, increasing the linking number in steps of +1. Binds to single-stranded DNA, transiently cleaves and then rejoins the ends, introducing a positive supercoil in the process. The scissile phosphodiester is attacked by the catalytic tyrosine of the enzyme, resulting in the formation of a DNA-(5'-phosphotyrosyl)-enzyme intermediate. Probably involved in rewinding DNA strands in regions of the chromosome that have opened up to allow replication, transcription, DNA repair and/or for DNA protection. This chain is Reverse gyrase, found in Thermococcus kodakarensis (strain ATCC BAA-918 / JCM 12380 / KOD1) (Pyrococcus kodakaraensis (strain KOD1)).